A 522-amino-acid polypeptide reads, in one-letter code: Endochitinase 11 (522 aa).

The signal sequence occupies residues 1–24 (MLFSMVMFTERWWVGSKDCPRVPA). Asparagine 148 and asparagine 275 each carry an N-linked (GlcNAc...) asparagine glycan. The GH18 domain maps to 235-522 (KHVYAPYVDF…ALTCLRNSTA (288 aa)). Catalysis depends on glutamate 346, which acts as the Proton donor. 2 N-linked (GlcNAc...) asparagine glycosylation sites follow: asparagine 455 and asparagine 519.

This sequence belongs to the glycosyl hydrolase 18 family. Chitinase class V subfamily.

The protein resides in the secreted. The enzyme catalyses Random endo-hydrolysis of N-acetyl-beta-D-glucosaminide (1-&gt;4)-beta-linkages in chitin and chitodextrins.. In terms of biological role, secreted chitinase involved in the degradation of chitin, a component of the cell walls of fungi and exoskeletal elements of some animals (including worms and arthropods). Participates in the infection process and directly acts in the penetration process of the host cuticle. The protein is Endochitinase 11 (chi11) of Metarhizium anisopliae (Entomophthora anisopliae).